A 203-amino-acid chain; its full sequence is Thymidylate kinase (203 aa).

7–14 (GGEGAGKT) lines the ATP pocket.

The protein belongs to the thymidylate kinase family.

It carries out the reaction dTMP + ATP = dTDP + ADP. In terms of biological role, phosphorylation of dTMP to form dTDP in both de novo and salvage pathways of dTTP synthesis. This Chlamydia trachomatis serovar L2 (strain ATCC VR-902B / DSM 19102 / 434/Bu) protein is Thymidylate kinase.